Here is a 732-residue protein sequence, read N- to C-terminus: 1,4-alpha-glucan branching enzyme GlgB (732 aa).

The Nucleophile role is filled by D408. E461 (proton donor) is an active-site residue.

Belongs to the glycosyl hydrolase 13 family. GlgB subfamily. Monomer.

The enzyme catalyses Transfers a segment of a (1-&gt;4)-alpha-D-glucan chain to a primary hydroxy group in a similar glucan chain.. Its pathway is glycan biosynthesis; glycogen biosynthesis. Functionally, catalyzes the formation of the alpha-1,6-glucosidic linkages in glycogen by scission of a 1,4-alpha-linked oligosaccharide from growing alpha-1,4-glucan chains and the subsequent attachment of the oligosaccharide to the alpha-1,6 position. The protein is 1,4-alpha-glucan branching enzyme GlgB of Rhodococcus jostii (strain RHA1).